A 67-amino-acid chain; its full sequence is ATP synthase protein 8 (67 aa).

The helical transmembrane segment at 8 to 24 (TWSITIMSMIMTLFIVF) threads the bilayer. The residue at position 54 (lysine 54) is an N6-acetyllysine; alternate. The residue at position 54 (lysine 54) is an N6-succinyllysine; alternate. Lysine 57 carries the post-translational modification N6-acetyllysine.

Belongs to the ATPase protein 8 family. As to quaternary structure, F-type ATPases have 2 components, CF(1) - the catalytic core - and CF(0) - the membrane proton channel. Component of an ATP synthase complex composed of ATP5PB, ATP5MC1, ATP5F1E, ATP5PD, ATP5ME, ATP5PF, ATP5MF, MT-ATP6, MT-ATP8, ATP5F1A, ATP5F1B, ATP5F1D, ATP5F1C, ATP5PO, ATP5MG, ATP5MK and ATP5MJ. Interacts with PRICKLE3.

The protein resides in the mitochondrion membrane. Functionally, mitochondrial membrane ATP synthase (F(1)F(0) ATP synthase or Complex V) produces ATP from ADP in the presence of a proton gradient across the membrane which is generated by electron transport complexes of the respiratory chain. F-type ATPases consist of two structural domains, F(1) - containing the extramembraneous catalytic core and F(0) - containing the membrane proton channel, linked together by a central stalk and a peripheral stalk. During catalysis, ATP synthesis in the catalytic domain of F(1) is coupled via a rotary mechanism of the central stalk subunits to proton translocation. Part of the complex F(0) domain. Minor subunit located with subunit a in the membrane. The polypeptide is ATP synthase protein 8 (MT-ATP8) (Felis silvestris lybica (African wildcat)).